The primary structure comprises 172 residues: Bifunctional protein PyrR (172 aa).

The PRPP-binding motif lies at 93–105 (VILIDDVLYTGRT).

It belongs to the purine/pyrimidine phosphoribosyltransferase family. PyrR subfamily. As to quaternary structure, homodimer and homohexamer; in equilibrium.

It carries out the reaction UMP + diphosphate = 5-phospho-alpha-D-ribose 1-diphosphate + uracil. Its function is as follows. Regulates transcriptional attenuation of the pyrimidine nucleotide (pyr) operon by binding in a uridine-dependent manner to specific sites on pyr mRNA. This disrupts an antiterminator hairpin in the RNA and favors formation of a downstream transcription terminator, leading to a reduced expression of downstream genes. Functionally, also displays a weak uracil phosphoribosyltransferase activity which is not physiologically significant. The protein is Bifunctional protein PyrR of Streptococcus sanguinis (strain SK36).